Reading from the N-terminus, the 422-residue chain is UDP-N-acetylglucosamine 1-carboxyvinyltransferase (422 aa).

22 to 23 (KN) provides a ligand contact to phosphoenolpyruvate. A UDP-N-acetyl-alpha-D-glucosamine-binding site is contributed by Arg95. The active-site Proton donor is Cys119. Cys119 bears the 2-(S-cysteinyl)pyruvic acid O-phosphothioketal mark. Residues 124-128 (RPIDQ), Asp309, and Val331 each bind UDP-N-acetyl-alpha-D-glucosamine.

Belongs to the EPSP synthase family. MurA subfamily.

The protein localises to the cytoplasm. The catalysed reaction is phosphoenolpyruvate + UDP-N-acetyl-alpha-D-glucosamine = UDP-N-acetyl-3-O-(1-carboxyvinyl)-alpha-D-glucosamine + phosphate. Its pathway is cell wall biogenesis; peptidoglycan biosynthesis. In terms of biological role, cell wall formation. Adds enolpyruvyl to UDP-N-acetylglucosamine. The sequence is that of UDP-N-acetylglucosamine 1-carboxyvinyltransferase from Anaeromyxobacter dehalogenans (strain 2CP-1 / ATCC BAA-258).